A 207-amino-acid chain; its full sequence is Ras-related protein RABH1d (207 aa).

16–23 (GDQSVGKT) contacts GTP. Residues 38 to 46 (YQATIGIDF) carry the Effector region motif. Residues 64-68 (DTAGQ), 122-125 (NKTD), and 152-153 (SA) each bind GTP. 2 S-geranylgeranyl cysteine lipidation sites follow: Cys205 and Cys207. Position 207 is a cysteine methyl ester (Cys207).

The protein belongs to the small GTPase superfamily. Rab family.

It is found in the golgi apparatus membrane. Functionally, protein transport. Regulator of membrane traffic from the Golgi apparatus towards the endoplasmic reticulum (ER). The chain is Ras-related protein RABH1d (RABH1D) from Arabidopsis thaliana (Mouse-ear cress).